Here is a 208-residue protein sequence, read N- to C-terminus: Small ribosomal subunit protein uS4 (208 aa).

Positions 97–158 (TRLDNVIYRM…RAQKYLCVQE (62 aa)) constitute an S4 RNA-binding domain.

The protein belongs to the universal ribosomal protein uS4 family. In terms of assembly, part of the 30S ribosomal subunit. Contacts protein S5. The interaction surface between S4 and S5 is involved in control of translational fidelity.

One of the primary rRNA binding proteins, it binds directly to 16S rRNA where it nucleates assembly of the body of the 30S subunit. In terms of biological role, with S5 and S12 plays an important role in translational accuracy. This chain is Small ribosomal subunit protein uS4, found in Xylella fastidiosa (strain 9a5c).